The chain runs to 1642 residues: Cholesterol transporter ABCA5 (1642 aa).

Residues Ser-32–Met-52 form a helical membrane-spanning segment. Asn-86 carries an N-linked (GlcNAc...) asparagine glycan. Transmembrane regions (helical) follow at residues Val-220–Ile-240, Leu-264–Ile-284, Ile-297–Leu-317, Gly-328–Ile-348, Leu-355–Met-375, and Leu-396–Tyr-416. N-linked (GlcNAc...) asparagine glycosylation occurs at Asn-458. In terms of domain architecture, ABC transporter 1 spans Ile-478 to Tyr-713. Residue Gly-514–Ser-521 coordinates ATP. The next 2 membrane-spanning stretches (helical) occupy residues Leu-866–Phe-886 and Val-967–Ile-987. A glycan (N-linked (GlcNAc...) asparagine) is linked at Asn-996. 6 helical membrane-spanning segments follow: residues Leu-1021–Met-1041, Val-1071–Phe-1091, Phe-1102–Ile-1122, Phe-1139–Gly-1159, Ala-1169–Ile-1189, and Leu-1207–Tyr-1227. Positions Lys-1249–Val-1268 are disordered. The span at Pro-1259–Val-1268 shows a compositional bias: acidic residues. Residues Ile-1290 to Lys-1533 enclose the ABC transporter 2 domain. Gly-1333 to Ser-1340 lines the ATP pocket.

This sequence belongs to the ABC transporter superfamily. ABCA family. N-glycosylated. In terms of tissue distribution, ubiquitously expressed. Highly expressed in testis, skeletal muscle, kidney, liver and placenta. Expressed in both the epithelial and mesenchymal compartments, present within the outer root sheath (ORS) of the hair follicle as well as dermal sheath. Expressed in multiple regions of the brain, including the hippocampus, superior frontal and inferior temporal cortices. Strongly expressed in neurons and moderately in microglia, with only weak expression in astrocytes and oligodendrocytes.

Its subcellular location is the golgi apparatus membrane. It localises to the lysosome membrane. The protein localises to the late endosome membrane. It is found in the cell membrane. It catalyses the reaction cholesterol(in) + ATP + H2O = cholesterol(out) + ADP + phosphate + H(+). Its function is as follows. Cholesterol efflux transporter in macrophages that is responsible for APOAI/high-density lipoproteins (HDL) formation at the plasma membrane under high cholesterol levels and participates in reverse cholesterol transport. May play a role in the processing of autolysosomes. This is Cholesterol transporter ABCA5 from Homo sapiens (Human).